Reading from the N-terminus, the 217-residue chain is MOB kinase activator 3A (217 aa).

Zn(2+) contacts are provided by Cys-83, Cys-88, His-165, and His-170.

Belongs to the MOB1/phocein family.

Its function is as follows. May regulate the activity of kinases. The chain is MOB kinase activator 3A (MOB3A) from Bos taurus (Bovine).